The following is a 131-amino-acid chain: Large ribosomal subunit protein uL14m (131 aa).

Belongs to the universal ribosomal protein uL14 family. Component of the mitochondrial large ribosomal subunit (mt-LSU). Mature N.crassa 74S mitochondrial ribosomes consist of a small (37S) and a large (54S) subunit. The 37S small subunit contains a 16S ribosomal RNA (16S mt-rRNA) and 32 different proteins. The 54S large subunit contains a 23S rRNA (23S mt-rRNA) and 42 different proteins.

The protein localises to the mitochondrion. In terms of biological role, component of the mitochondrial ribosome (mitoribosome), a dedicated translation machinery responsible for the synthesis of mitochondrial genome-encoded proteins, including at least some of the essential transmembrane subunits of the mitochondrial respiratory chain. The mitoribosomes are attached to the mitochondrial inner membrane and translation products are cotranslationally integrated into the membrane. The protein is Large ribosomal subunit protein uL14m (mrpl38) of Neurospora crassa (strain ATCC 24698 / 74-OR23-1A / CBS 708.71 / DSM 1257 / FGSC 987).